Here is a 480-residue protein sequence, read N- to C-terminus: MELPSNLLPDEASPEWMNKGDNAWQLTAATMVGLQSIPGLVILYGSLVKKTWAINSAFMAFYAFASVLLCWVSWAYQMSFGEKMVFFLGKPNVALDEKFLLGKAFLGNFPNATMVFYQGVFAGLTLILIAGALLGRMNIRAWMLFVPLWVTFSYTVVAFSIWCPDGWLAKRGVIDFAGGYVIHLSAGVAGFTAAYWVGPRADKDRETFPAATNNMIMVLAGAGLLWMGWSGFNGGAPFVASTIASLAILNTHVCTAASITVWVMLDTFYFGKPTVFGAVQGMITGLVCITPAAGVVQGWAAILMGFISGSIPWYTMMVLHNKVNFLKKIDDPMAVFHTHAIAGALGGILTGFFAVPKLCRLFYMVPDWEKYIGLAYGLQNKGATQAGLKQMVIQIEAIVFVICYNVLMTSLICLIVRVIVPLRLNGDALQMGDKAIHGEDAFALHSEATKFVNIKRNQVYDTQDFSSIPESRSLGELQMV.

Residues 1-27 lie on the Extracellular side of the membrane; sequence MELPSNLLPDEASPEWMNKGDNAWQLT. The chain crosses the membrane as a helical span at residues 28 to 48; sequence AATMVGLQSIPGLVILYGSLV. Topologically, residues 49-51 are cytoplasmic; it reads KKT. Residues 52-72 traverse the membrane as a helical segment; the sequence is WAINSAFMAFYAFASVLLCWV. The Extracellular portion of the chain corresponds to 73–113; it reads SWAYQMSFGEKMVFFLGKPNVALDEKFLLGKAFLGNFPNAT. Asparagine 111 is a glycosylation site (N-linked (GlcNAc...) asparagine). A helical membrane pass occupies residues 114 to 134; that stretch reads MVFYQGVFAGLTLILIAGALL. Topologically, residues 135–141 are cytoplasmic; that stretch reads GRMNIRA. Residues 142 to 162 form a helical membrane-spanning segment; sequence WMLFVPLWVTFSYTVVAFSIW. The Extracellular segment spans residues 163–175; it reads CPDGWLAKRGVID. The chain crosses the membrane as a helical span at residues 176 to 196; that stretch reads FAGGYVIHLSAGVAGFTAAYW. Topologically, residues 197 to 214 are cytoplasmic; that stretch reads VGPRADKDRETFPAATNN. The helical transmembrane segment at 215-235 threads the bilayer; that stretch reads MIMVLAGAGLLWMGWSGFNGG. The Extracellular segment spans residues 236-242; that stretch reads APFVAST. Residues 243–263 form a helical membrane-spanning segment; it reads IASLAILNTHVCTAASITVWV. Residues 264-274 are Cytoplasmic-facing; sequence MLDTFYFGKPT. Residues 275-295 traverse the membrane as a helical segment; it reads VFGAVQGMITGLVCITPAAGV. The Extracellular portion of the chain corresponds to 296-298; sequence VQG. The helical transmembrane segment at 299–319 threads the bilayer; that stretch reads WAAILMGFISGSIPWYTMMVL. The Cytoplasmic portion of the chain corresponds to 320–334; that stretch reads HNKVNFLKKIDDPMA. Residues 335–355 form a helical membrane-spanning segment; it reads VFHTHAIAGALGGILTGFFAV. The Extracellular portion of the chain corresponds to 356–394; the sequence is PKLCRLFYMVPDWEKYIGLAYGLQNKGATQAGLKQMVIQ. Residues 395–415 form a helical membrane-spanning segment; that stretch reads IEAIVFVICYNVLMTSLICLI. The Cytoplasmic portion of the chain corresponds to 416 to 480; it reads VRVIVPLRLN…SRSLGELQMV (65 aa).

Belongs to the ammonia transporter channel (TC 1.A.11.2) family.

It localises to the cell membrane. Involved in ammonium transport. May be involved in arbuscular mycorrhizal (AM) symbiosis with AM fungi. The polypeptide is Ammonium transporter 2 member 4 (Medicago truncatula (Barrel medic)).